The chain runs to 438 residues: UDP-glycosyltransferase 84B2 (438 aa).

Residues Ser-260, 314 to 316, 331 to 339, and 353 to 356 contribute to the UDP-alpha-D-glucose site; these read GQQ, HCGWNSTIE, and WIDQ.

The protein belongs to the UDP-glycosyltransferase family.

The sequence is that of UDP-glycosyltransferase 84B2 (UGT84B2) from Arabidopsis thaliana (Mouse-ear cress).